We begin with the raw amino-acid sequence, 405 residues long: Arrestin red cell isoform 2 (405 aa).

The protein belongs to the arrestin family.

It localises to the cytoplasm. The chain is Arrestin red cell isoform 2 from Oncorhynchus mykiss (Rainbow trout).